The primary structure comprises 486 residues: Cardiolipin synthase A (486 aa).

The next 2 membrane-spanning stretches (helical) occupy residues 3–23 (TFYTVVSWLVILGYWVLIAGV) and 38–58 (MAWLLIIYILPLVGIIAYLSV). PLD phosphodiesterase domains follow at residues 219-246 (MDLRQHRKMVMIDNYIAYTGSMNMVDPR) and 399-426 (EGGLLHTKSVLVDGELSLVGTVNLDMRS). Catalysis depends on residues histidine 224, lysine 226, aspartate 231, histidine 404, lysine 406, and aspartate 411.

It belongs to the phospholipase D family. Cardiolipin synthase subfamily. ClsA sub-subfamily.

It localises to the cell inner membrane. The catalysed reaction is 2 a 1,2-diacyl-sn-glycero-3-phospho-(1'-sn-glycerol) = a cardiolipin + glycerol. Its function is as follows. Catalyzes the reversible phosphatidyl group transfer from one phosphatidylglycerol molecule to another to form cardiolipin (CL) (diphosphatidylglycerol) and glycerol. This Salmonella paratyphi A (strain ATCC 9150 / SARB42) protein is Cardiolipin synthase A.